We begin with the raw amino-acid sequence, 737 residues long: Zinc finger protein 280C (737 aa).

Glycyl lysine isopeptide (Lys-Gly) (interchain with G-Cter in SUMO2) cross-links involve residues K5, K10, K14, K33, and K55. Over residues A57–H66 the composition is skewed to polar residues. The tract at residues A57–S137 is disordered. K75 is covalently cross-linked (Glycyl lysine isopeptide (Lys-Gly) (interchain with G-Cter in SUMO2)). Residue S80 is modified to Phosphoserine. A compositionally biased stretch (polar residues) spans S112–N123. Glycyl lysine isopeptide (Lys-Gly) (interchain with G-Cter in SUMO2) cross-links involve residues K113, K126, K167, K174, K180, and K187. Positions P176–T185 are enriched in polar residues. The segment at P176–T223 is disordered. Residues P211–T223 are compositionally biased toward polar residues. T223 is subject to Phosphothreonine. A Phosphoserine modification is found at S227. A Glycyl lysine isopeptide (Lys-Gly) (interchain with G-Cter in SUMO2) cross-link involves residue K273. C2H2-type zinc fingers lie at residues F316 to H338, T353 to H376, T383 to H406, Y413 to H436, and H470 to H492. K522 participates in a covalent cross-link: Glycyl lysine isopeptide (Lys-Gly) (interchain with G-Cter in SUMO2). The segment covering S535 to K579 has biased composition (polar residues). A disordered region spans residues S535–K602. T540 carries the post-translational modification Phosphothreonine. Residues K564 and K574 each participate in a glycyl lysine isopeptide (Lys-Gly) (interchain with G-Cter in SUMO2) cross-link. Basic residues predominate over residues P580–K602.

The protein resides in the nucleus. Its function is as follows. May function as a transcription factor. This is Zinc finger protein 280C (ZNF280C) from Homo sapiens (Human).